Reading from the N-terminus, the 151-residue chain is UPF0178 protein PSHAb0045 (151 aa).

Belongs to the UPF0178 family.

In Pseudoalteromonas translucida (strain TAC 125), this protein is UPF0178 protein PSHAb0045.